Reading from the N-terminus, the 828-residue chain is Protein TAPT1 homolog (828 aa).

Low complexity-rich tracts occupy residues Asn-67–Ile-83, Gln-212–Pro-233, and Ser-302–Asn-321. Disordered stretches follow at residues Asn-67–Gly-92, Gln-212–Tyr-236, and Gln-297–Ile-346. Helical transmembrane passes span Ile-428–Ile-448, Gln-472–Ile-492, Ile-562–Val-582, Ser-722–Val-742, and Ile-754–Ile-774. The segment covering Leu-797 to Thr-822 has biased composition (low complexity). Residues Leu-797–Asn-828 form a disordered region.

Belongs to the TAPT1 family.

Its subcellular location is the membrane. The sequence is that of Protein TAPT1 homolog from Dictyostelium discoideum (Social amoeba).